The chain runs to 271 residues: 4-hydroxy-tetrahydrodipicolinate reductase (271 aa).

Residues 11-16 and E37 each bind NAD(+); that span reads GGSGRM. R38 provides a ligand contact to NADP(+). Residues 101-103 and 125-128 each bind NAD(+); these read GTT and APNM. The active-site Proton donor/acceptor is H158. H159 is a (S)-2,3,4,5-tetrahydrodipicolinate binding site. Catalysis depends on K162, which acts as the Proton donor. 168–169 is a binding site for (S)-2,3,4,5-tetrahydrodipicolinate; the sequence is GT.

Belongs to the DapB family.

It is found in the cytoplasm. The catalysed reaction is (S)-2,3,4,5-tetrahydrodipicolinate + NAD(+) + H2O = (2S,4S)-4-hydroxy-2,3,4,5-tetrahydrodipicolinate + NADH + H(+). It carries out the reaction (S)-2,3,4,5-tetrahydrodipicolinate + NADP(+) + H2O = (2S,4S)-4-hydroxy-2,3,4,5-tetrahydrodipicolinate + NADPH + H(+). It participates in amino-acid biosynthesis; L-lysine biosynthesis via DAP pathway; (S)-tetrahydrodipicolinate from L-aspartate: step 4/4. Functionally, catalyzes the conversion of 4-hydroxy-tetrahydrodipicolinate (HTPA) to tetrahydrodipicolinate. In Shewanella piezotolerans (strain WP3 / JCM 13877), this protein is 4-hydroxy-tetrahydrodipicolinate reductase.